We begin with the raw amino-acid sequence, 204 residues long: MVSLKTGILGGTFDPIHTGHLILADEVKNRLGLDEVIFIPTGQPYYKADKTISPAEDRLNMVKLAISDKPYFRVMDIEIKRSGPTYTADTLNDLKTILPEKTELYFMLGWDNLEALPRWHKASEIIRLCRLVAAPRIGQVKPDVDELDDKLPGLQQSLILLSKPEVDISSSLVRERVENGQGVEHLVPAAVASYIKEHNLYCRK.

Belongs to the NadD family.

It carries out the reaction nicotinate beta-D-ribonucleotide + ATP + H(+) = deamido-NAD(+) + diphosphate. The protein operates within cofactor biosynthesis; NAD(+) biosynthesis; deamido-NAD(+) from nicotinate D-ribonucleotide: step 1/1. Functionally, catalyzes the reversible adenylation of nicotinate mononucleotide (NaMN) to nicotinic acid adenine dinucleotide (NaAD). The sequence is that of Probable nicotinate-nucleotide adenylyltransferase from Dehalococcoides mccartyi (strain CBDB1).